Here is a 504-residue protein sequence, read N- to C-terminus: Glycerol kinase (504 aa).

Residue T14 participates in ADP binding. 3 residues coordinate ATP: T14, T15, and S16. T14 lines the sn-glycerol 3-phosphate pocket. ADP is bound at residue R18. 3 residues coordinate sn-glycerol 3-phosphate: R84, E85, and Y136. Glycerol-binding residues include R84, E85, and Y136. The residue at position 232 (H232) is a Phosphohistidine; by HPr. D246 contributes to the sn-glycerol 3-phosphate binding site. 2 residues coordinate glycerol: D246 and Q247. ADP is bound by residues T268 and G311. The ATP site is built by T268, G311, Q315, and G412. ADP-binding residues include G412 and N416.

This sequence belongs to the FGGY kinase family. Homotetramer and homodimer (in equilibrium). In terms of processing, the phosphoenolpyruvate-dependent sugar phosphotransferase system (PTS), including enzyme I, and histidine-containing protein (HPr) are required for the phosphorylation, which leads to the activation of the enzyme.

The enzyme catalyses glycerol + ATP = sn-glycerol 3-phosphate + ADP + H(+). It participates in polyol metabolism; glycerol degradation via glycerol kinase pathway; sn-glycerol 3-phosphate from glycerol: step 1/1. With respect to regulation, activated by phosphorylation and inhibited by fructose 1,6-bisphosphate (FBP). Its function is as follows. Key enzyme in the regulation of glycerol uptake and metabolism. Catalyzes the phosphorylation of glycerol to yield sn-glycerol 3-phosphate. This Streptococcus pyogenes serotype M6 (strain ATCC BAA-946 / MGAS10394) protein is Glycerol kinase.